A 505-amino-acid polypeptide reads, in one-letter code: Lysine--tRNA ligase (505 aa).

Mg(2+) is bound by residues Glu415 and Glu422.

It belongs to the class-II aminoacyl-tRNA synthetase family. In terms of assembly, homodimer. Requires Mg(2+) as cofactor.

The protein localises to the cytoplasm. It catalyses the reaction tRNA(Lys) + L-lysine + ATP = L-lysyl-tRNA(Lys) + AMP + diphosphate. In Salmonella typhimurium (strain LT2 / SGSC1412 / ATCC 700720), this protein is Lysine--tRNA ligase (lysS).